A 161-amino-acid chain; its full sequence is uncharacterized protein (161 aa).

An RING-type zinc finger spans residues 72–134; that stretch reads CAICLDNLQN…EAQQTCPTCR (63 aa). The tract at residues 140-161 is disordered; sequence DKEVEEEERQRNLEELHDSMYG.

This is an uncharacterized protein from Caenorhabditis elegans.